We begin with the raw amino-acid sequence, 162 residues long: MADSSFDVVSKVDRMEADNAVHQTQKEVEQRYDFKNVGASIEWSGDTILMKASSEERVKAILDVLQTKMIKRGIGLKSLEEGEPFASGKEYRIEVTLKQGIDQANAKKIGKIIRDEGPKGIKSRVEGDELRVSSKSRDDLQQTIALLKGADVDLDLQFVNFR.

This sequence belongs to the YajQ family.

Nucleotide-binding protein. This chain is Nucleotide-binding protein CMM_2802, found in Clavibacter michiganensis subsp. michiganensis (strain NCPPB 382).